The primary structure comprises 181 residues: Heavy metal-associated isoprenylated plant protein 46 (181 aa).

The HMA domain maps to 2 to 71 (KQKILIRVTM…KVAFAELVSV (70 aa)). Positions 74–121 (VEPPKKEDEKKGGDGKGAEGKGGDQKGGDKKGPDDKEPPEPKPVPCYP) are disordered. Residues 75–113 (EPPKKEDEKKGGDGKGAEGKGGDQKGGDKKGPDDKEPPE) are compositionally biased toward basic and acidic residues. Cysteine 178 bears the Cysteine methyl ester mark. A lipid anchor (S-farnesyl cysteine) is attached at cysteine 178. Positions 179 to 181 (KIM) are cleaved as a propeptide — removed in mature form.

This sequence belongs to the HIPP family.

Its function is as follows. Probable heavy-metal-binding protein. The protein is Heavy metal-associated isoprenylated plant protein 46 of Arabidopsis thaliana (Mouse-ear cress).